Here is a 5098-residue protein sequence, read N- to C-terminus: Auxin transport protein BIG (5098 aa).

Alanine 2 is modified (N-acetylalanine). Helical transmembrane passes span 1150 to 1170 (AILL…NGLL) and 1458 to 1478 (LAAE…IGTL). Positions 1539 to 1549 (SVDEDEDDGTS) are enriched in acidic residues. The segment at 1539–1562 (SVDEDEDDGTSDGEVASLDKEDEE) is disordered. The UBR-type zinc finger occupies 1573–1644 (KVCTFTSSGS…RGSSCQCLKP (72 aa)). The ZZ-type zinc finger occupies 2613–2672 (SVQYCCDGCSTVPILRRRWHCTVCPDFDLCEACYEVLDADRLPPPHTRDHPMTAIPIEVE). 8 residues coordinate Zn(2+): cysteine 2618, cysteine 2621, cysteine 2633, cysteine 2636, cysteine 2642, cysteine 2645, histidine 2658, and histidine 2662. The helical transmembrane segment at 2813-2833 (SSLGEIVILVFMFFTLMLRSW) threads the bilayer. The disordered stretch occupies residues 3149–3174 (EVVTGSNRSGSQSVDSKKKKKGEDGH). The span at 3151–3162 (VTGSNRSGSQSV) shows a compositional bias: polar residues. An MYND-type; degenerate zinc finger spans residues 3464-3504 (CPRCSRPVTDKHGICSNCHENAYQCRQCRNINYENLDSFLC). Coiled-coil stretches lie at residues 3537–3557 (KKGL…YQQL) and 4313–4333 (LEIL…NQEE). A UBR4 E3 catalytic module region spans residues 4569-5098 (PSVPLILSML…QFVRSAIDKD (530 aa)). Residues 4698–4817 (GLACMVCREG…WDNLNALGRA (120 aa)) form a HemiRING-type zinc finger. Zn(2+)-binding residues include cysteine 4701, cysteine 4704, histidine 4751, and cysteine 4754. The 279-residue stretch at 4820–5098 (SRLRLLTYDI…QFVRSAIDKD (279 aa)) folds into the UZI domain. Positions 4891-4903 (SSTSTATAPSSDS) are enriched in low complexity. The tract at residues 4891–4915 (SSTSTATAPSSDSRPLTPGSQLSST) is disordered.

Belongs to the UBR4 family. As to expression, constitutively expressed in roots, rosette leaves, inflorescence stems, and flowers. Present in inflorescence meristems, floral meristems and vascular tissues.

Its subcellular location is the membrane. Its function is as follows. Required for auxin efflux and polar auxin transport (PAT) influencing auxin-mediated developmental responses (e.g. cell elongation, apical dominance, lateral root production, inflorescence architecture, general growth and development). Controls the elongation of the pedicels and stem internodes through auxin action. Involved in the expression modulation of light-regulated genes. Represses CAB1 and CAB3 genes expression in etiolated seedlings. Confers sensitivity to the auxin transport inhibitors N-1-naphthylphthalamic acid (NPA), 2-carboxyphenyl-3-phenylpropane-l,2-dione (CPD), and methyl-2-chloro-9-hydroxyfluorene-9-carboxylate (CFM). Influences the polarized subcellular distribution of the auxin transporter PIN1 in response to auxin transport inhibitors. Plays a role in the regulation of responses to phytohormones such as auxin, cytokinins, ethylene and gibberellic acid (GA), particularly during light-mediated stimuli (e.g. shade ovoidance, etiolation). Required for pericycle cell activation to form lateral root primordia (LRP) in both high and low phosphate P conditions. Necessary for the plant-growth promotion and lateral root development mediated by the fungus Trichoderma virens. This chain is Auxin transport protein BIG (BIG), found in Arabidopsis thaliana (Mouse-ear cress).